Reading from the N-terminus, the 67-residue chain is Large ribosomal subunit protein bL35 (67 aa).

It belongs to the bacterial ribosomal protein bL35 family.

The chain is Large ribosomal subunit protein bL35 from Rhizobium etli (strain CIAT 652).